Reading from the N-terminus, the 446-residue chain is Exodeoxyribonuclease 7 large subunit (446 aa).

Belongs to the XseA family. In terms of assembly, heterooligomer composed of large and small subunits.

It is found in the cytoplasm. It carries out the reaction Exonucleolytic cleavage in either 5'- to 3'- or 3'- to 5'-direction to yield nucleoside 5'-phosphates.. Its function is as follows. Bidirectionally degrades single-stranded DNA into large acid-insoluble oligonucleotides, which are then degraded further into small acid-soluble oligonucleotides. The sequence is that of Exodeoxyribonuclease 7 large subunit from Streptococcus equi subsp. zooepidemicus (strain MGCS10565).